Reading from the N-terminus, the 227-residue chain is 7-cyano-7-deazaguanine synthase (227 aa).

7–17 (VSGGMDSLVAT) is an ATP binding site. C187, C195, C198, and C201 together coordinate Zn(2+).

This sequence belongs to the QueC family. Requires Zn(2+) as cofactor.

It carries out the reaction 7-carboxy-7-deazaguanine + NH4(+) + ATP = 7-cyano-7-deazaguanine + ADP + phosphate + H2O + H(+). It functions in the pathway purine metabolism; 7-cyano-7-deazaguanine biosynthesis. Its function is as follows. Catalyzes the ATP-dependent conversion of 7-carboxy-7-deazaguanine (CDG) to 7-cyano-7-deazaguanine (preQ(0)). The sequence is that of 7-cyano-7-deazaguanine synthase from Chlorobaculum parvum (strain DSM 263 / NCIMB 8327) (Chlorobium vibrioforme subsp. thiosulfatophilum).